The following is a 269-amino-acid chain: Aquaporin-1 (269 aa).

Residues 1–11 are Cytoplasmic-facing; sequence MASEIKKKLFW. The helical transmembrane segment at 12–29 threads the bilayer; it reads RAVVAEFLAMTLFVFISI. The Extracellular portion of the chain corresponds to 30 to 46; the sequence is GSALGFNYPLERNQTLV. The helical transmembrane segment at 47-65 threads the bilayer; the sequence is QDNVKVSLAFGLSIATLAQ. Residues 66–68 lie on the Cytoplasmic side of the membrane; the sequence is SVG. The stretch at 69–82 is an intramembrane region; sequence HISGAHLNPAVTLG. The NPA 1 motif lies at 76-78; sequence NPA. The Cytoplasmic segment spans residues 83-90; it reads LLLSCQIS. Residues 91–109 traverse the membrane as a helical segment; it reads ILRAVMYIIAQCVGAIVAT. Topologically, residues 110-133 are extracellular; that stretch reads AILSGITSSLVDNSLGRNDLAHGV. The helical transmembrane segment at 134–153 threads the bilayer; it reads NSGQGLGIEIIGTLQLVLCV. Residues 154–163 lie on the Cytoplasmic side of the membrane; it reads LATTDRRRRD. A helical membrane pass occupies residues 164–181; the sequence is LGGSAPLAIGLSVALGHL. At 182 to 186 the chain is on the extracellular side; the sequence is LAIDY. An intramembrane segment occupies 187–199; it reads TGCGINPARSFGS. The NPA 2 signature appears at 192 to 194; that stretch reads NPA. Topologically, residues 200 to 206 are extracellular; that stretch reads AVLTRNF. Asn-205 is a glycosylation site (N-linked (GlcNAc...) asparagine). Residues 207-224 form a helical membrane-spanning segment; sequence SNHWIFWVGPFIGGALAV. Topologically, residues 225–269 are cytoplasmic; it reads LIYDFILAPRSSDFTDRMKVWTSGQVEEYDLDADDINSRVEMKPK. Ser-247 carries the phosphoserine modification. At Tyr-253 the chain carries Phosphotyrosine. Phosphoserine is present on Ser-262.

It belongs to the MIP/aquaporin (TC 1.A.8) family. In terms of assembly, homotetramer; each monomer provides an independent water pore. Component of the ankyrin-1 complex in the erythrocyte, composed of ANK1, RHCE, RHAG, SLC4A1, EPB42, GYPA, GYPB and AQP1. Interacts with EPHB2; involved in endolymph production in the inner ear. Identified in a complex with STOM. Interacts (via the N-terminal) with ANK1 (via ANK 1-5 repeats). Interacts (via the C-terminal) with EPB42. Detected in erythrocytes (at protein level). In the kidney, expressed on luminal and basal borders of proximal tubules and in the thin limb of Henle's loop (at protein level).

Its subcellular location is the cell membrane. The enzyme catalyses H2O(in) = H2O(out). It catalyses the reaction nitric oxide(out) = nitric oxide(in). It carries out the reaction CO2(out) = CO2(in). The catalysed reaction is glycerol(in) = glycerol(out). The enzyme catalyses H2O2(out) = H2O2(in). It catalyses the reaction K(+)(in) = K(+)(out). It carries out the reaction Na(+)(in) = Na(+)(out). Its function is as follows. Forms a water channel that facilitates the transport of water across cell membranes, playing a crucial role in water homeostasis in various tissues. Could also be permeable to small solutes including hydrogen peroxide, glycerol and gases such as amonnia (NH3), nitric oxide (NO) and carbon dioxide (CO2). Recruited to the ankyrin-1 complex, a multiprotein complex of the erythrocyte membrane, it could be part of a CO2 metabolon, linking facilitated diffusion of CO2 across the membrane, anion exchange of Cl(-)/HCO3(-) and interconversion of dissolved CO2 and carbonic acid in the cytosol. In vitro, it shows non-selective gated cation channel activity and may be permeable to cations like K(+) and Na(+) in vivo. This is Aquaporin-1 from Mus musculus (Mouse).